The sequence spans 179 residues: Large ribosomal subunit protein uL5 (179 aa).

Belongs to the universal ribosomal protein uL5 family. As to quaternary structure, part of the 50S ribosomal subunit; part of the 5S rRNA/L5/L18/L25 subcomplex. Contacts the 5S rRNA and the P site tRNA. Forms a bridge to the 30S subunit in the 70S ribosome.

In terms of biological role, this is one of the proteins that bind and probably mediate the attachment of the 5S RNA into the large ribosomal subunit, where it forms part of the central protuberance. In the 70S ribosome it contacts protein S13 of the 30S subunit (bridge B1b), connecting the 2 subunits; this bridge is implicated in subunit movement. Contacts the P site tRNA; the 5S rRNA and some of its associated proteins might help stabilize positioning of ribosome-bound tRNAs. The sequence is that of Large ribosomal subunit protein uL5 from Vibrio vulnificus (strain CMCP6).